The following is a 36-amino-acid chain: F420-dependent NADP reductase (36 aa).

Residue 9–12 coordinates NADP(+); sequence TGNI.

Belongs to the F420-dependent NADP reductase family. Homotetramer.

The enzyme catalyses reduced coenzyme F420-(gamma-L-Glu)(n) + NADP(+) = oxidized coenzyme F420-(gamma-L-Glu)(n) + NADPH + 2 H(+). Functionally, catalyzes the reduction of NADP(+) with F420H(2) via hydride transfer, and the reverse reaction, i.e. the reduction of F420 with NADPH. In M.organophilum, an alcohol-fermenting methanogen containing an NADP-dependent alcohol dehydrogenase, is probably involved in the regeneration of F420H(2) required for CO(2) reduction to methane. Thus, during growth on alcohol and CO(2), the F420-dependent NADP reductase probably has the function of coupling the NADP-dependent oxidation of the alcohol to the aldehyde with the F420-dependent reduction of CO(2) to methane. This Methanogenium organophilum protein is F420-dependent NADP reductase (fno).